The following is an 885-amino-acid chain: Leucine--tRNA ligase (885 aa).

Residues 48-58 carry the 'HIGH' region motif; that stretch reads PYPSGKLHMGH. The 'KMSKS' region motif lies at 639-643; sequence TMSKS. Lysine 642 is a binding site for ATP.

Belongs to the class-I aminoacyl-tRNA synthetase family.

It is found in the cytoplasm. It carries out the reaction tRNA(Leu) + L-leucine + ATP = L-leucyl-tRNA(Leu) + AMP + diphosphate. The polypeptide is Leucine--tRNA ligase (Bordetella petrii (strain ATCC BAA-461 / DSM 12804 / CCUG 43448)).